The chain runs to 227 residues: PKHD-type hydroxylase Bphy_5374 (227 aa).

Positions 79 to 179 constitute a Fe2OG dioxygenase domain; sequence KVYPPLFNRY…RVASFFWVQS (101 aa). Fe cation is bound by residues histidine 97, aspartate 99, and histidine 160. A 2-oxoglutarate-binding site is contributed by arginine 170.

It depends on Fe(2+) as a cofactor. Requires L-ascorbate as cofactor.

The sequence is that of PKHD-type hydroxylase Bphy_5374 from Paraburkholderia phymatum (strain DSM 17167 / CIP 108236 / LMG 21445 / STM815) (Burkholderia phymatum).